A 144-amino-acid chain; its full sequence is TSC22 domain family protein 1 (144 aa).

The leucine-zipper stretch occupies residues 77–98; that stretch reads LKEQIKELIEKNSQLEQENNLL. Residues 109 to 144 form a disordered region; that stretch reads QFQAQLQTGSPPATTQPQGTTQPPAQPASQGSGPTA. The segment covering 115-144 has biased composition (low complexity); sequence QTGSPPATTQPQGTTQPPAQPASQGSGPTA.

Belongs to the TSC-22/Dip/Bun family. In terms of assembly, forms homodimers. Forms a heterodimer with TSC22D4/THG1. Interacts with histone H1-2. Interacts with GNL3.

The protein localises to the cytoplasm. The protein resides in the nucleus. In terms of biological role, transcriptional repressor. Plays a role in the repression of hematopoietic precursor cell growth. Promotes IL2 deprivation-induced apoptosis in T-lymphocytes, via repression of TSC22D3/GILZ transcription and activation of the caspase cascade. Positively regulates cell death in response to TGFB3 during mammary gland involution. The polypeptide is TSC22 domain family protein 1 (Bos taurus (Bovine)).